The primary structure comprises 810 residues: Interleukin-4 receptor subunit alpha (810 aa).

The signal sequence occupies residues 1 to 25 (MGRLCTKFLTSVGCLILLLVTGSGS). Residues 26-233 (IKVLGEPTCF…NHFQLPLIQR (208 aa)) lie on the Extracellular side of the membrane. Cys34 and Cys44 are disulfide-bonded. N-linked (GlcNAc...) asparagine glycosylation occurs at Asn72. A disulfide bond links Cys75 and Cys87. One can recognise a Fibronectin type-III domain in the interval 126–224 (APDNLTLHTN…EWSPSITWYN (99 aa)). N-linked (GlcNAc...) asparagine glycans are attached at residues Asn129, Asn135, and Asn163. Ser165 is subject to Phosphoserine. Residues 213 to 217 (WSEWS) carry the WSXWS motif motif. A helical membrane pass occupies residues 234 to 257 (LPLGVTISCLCIPLFCLFCYFSIT). Residues 258 to 810 (KIKKIWWDQI…PVGALGIAVS (553 aa)) are Cytoplasmic-facing. Residues 263–271 (WWDQIPTPA) carry the Box 1 motif motif. The segment at 441-557 (GSGQASVSWA…ESWEQILHMS (117 aa)) is required for IRS1 activation and IL4-induced cell growth. Residues 460 to 482 (ATCQVTEQPSHPGPLSGSPAQSA) form a disordered region. Tyr500 carries the post-translational modification Phosphotyrosine. Positions 510 to 546 (APNPGELAPEQQQADHLEEEEPPSPADPHSSGPPMQP) are disordered. A required for IL4-induced gene expression region spans residues 557–653 (SVLQHGAAAG…SSVPLFTFGL (97 aa)). Phosphotyrosine is present on residues Tyr575, Tyr603, and Tyr631. The interval 586–672 (AAQDPGVPGV…NSDPPKSPPE (87 aa)) is disordered. Residues 635–647 (QNPVPNQSPSSVP) show a composition bias toward low complexity. An ITIM motif motif is present at residues 707 to 712 (IVYSSL). The interval 766 to 810 (PPEANLMSAPKTPSNLSGEGKGPGHSPVPSQTTEVPVGALGIAVS) is disordered.

It belongs to the type I cytokine receptor family. Type 4 subfamily. As to quaternary structure, the functional IL4 receptor is formed by initial binding of IL4 to IL4R. Subsequent recruitment to the complex of the common gamma chain, in immune cells, creates a type I receptor and, in non-immune cells, of IL13RA1 forms a type II receptor. IL4R can also interact with the IL13/IL13RA1 complex to form a similar type II receptor. Interacts with the SH2-containing phosphatases, PTPN6/SHIP1, PTPN11/SHIP2 and INPP5D/SHIP. Interacts with JAK3. Interacts with PIK3C3. Interacts with JAK1 through a Box 1-containing region; inhibited by SOCS5. Interacts with SOCS5; inhibits IL4 signaling. Interacts with CLM1. Interacts with IL13RA2. Post-translationally, on IL4 binding, phosphorylated on C-terminal tyrosine residues. Soluble IL4R can also be produced by proteolytic cleavage at the cell surface (shedding). As to expression, expressed in both Th1 and Th2 cells.

The protein localises to the cell membrane. The protein resides in the secreted. In terms of biological role, receptor for both interleukin 4 and interleukin 13. Couples to the JAK1/2/3-STAT6 pathway. The IL4 response is involved in promoting Th2 differentiation. The IL4/IL13 responses are involved in regulating IgE production and, chemokine and mucus production at sites of allergic inflammation. In certain cell types, can signal through activation of insulin receptor substrates, IRS1/IRS2. The polypeptide is Interleukin-4 receptor subunit alpha (Il4r) (Mus musculus (Mouse)).